Consider the following 529-residue polypeptide: Lysophosphatidylcholine acyltransferase 2 (529 aa).

The Cytoplasmic segment spans residues 1–50; that stretch reads MPPPHRVFALPRQQSLLLPAVINPFVHDLSLSTADITKCFLLGIILVPLR. The chain crosses the membrane as a helical; Signal-anchor for type II membrane protein span at residues 51–71; it reads AIFLLLVLLVMWPVSVIITFG. Topologically, residues 72–529 are lumenal; it reads QSLKGVVEPM…EDSASDKKDD (458 aa). The HXXXXD motif signature appears at 128–133; it reads HSSFFD. Positions 202-205 match the EGTC motif motif; the sequence is EGTC. A glycan (N-linked (GlcNAc...) asparagine) is linked at Asn-207. EF-hand domains are found at residues 373-408, 410-445, and 449-480; these read PISP…LCRP, NNEE…ALGV, and DVHS…HPEY. Residues Asp-386, Asn-388, Asp-390, Thr-392, Glu-397, Asp-423, Asp-425, Asp-427, Cys-429, Glu-434, Asp-458, Asp-460, Ser-462, His-464, and Glu-469 each coordinate Ca(2+).

It belongs to the 1-acyl-sn-glycerol-3-phosphate acyltransferase family.

The protein resides in the endoplasmic reticulum membrane. The protein localises to the golgi apparatus membrane. It is found in the cell membrane. It localises to the lipid droplet. It carries out the reaction a 1-acyl-sn-glycero-3-phosphocholine + an acyl-CoA = a 1,2-diacyl-sn-glycero-3-phosphocholine + CoA. The catalysed reaction is a 1-O-alkyl-sn-glycero-3-phosphocholine + acetyl-CoA = a 1-O-alkyl-2-acetyl-sn-glycero-3-phosphocholine + CoA. It catalyses the reaction a 1-acyl-sn-glycero-3-phosphate + an acyl-CoA = a 1,2-diacyl-sn-glycero-3-phosphate + CoA. The enzyme catalyses a 1-O-(1Z-alkenyl)-sn-glycero-3-phosphocholine + an acyl-CoA = a 1-O-(1Z-alkenyl)-2-acyl-sn-glycero-3-phosphocholine + CoA. It carries out the reaction 1-hexadecanoyl-sn-glycero-3-phosphate + (9Z)-octadecenoyl-CoA = 1-hexadecanoyl-2-(9Z-octadecenoyl)-sn-glycero-3-phosphate + CoA. The catalysed reaction is 1-(9Z-octadecenoyl)-sn-glycero-3-phosphate + (9Z)-octadecenoyl-CoA = 1,2-di-(9Z-octadecenoyl)-sn-glycero-3-phosphate + CoA. It catalyses the reaction 1-(9Z-octadecenoyl)-sn-glycero-3-phosphate + hexadecanoyl-CoA = 1-(9Z)-octadecenoyl-2-hexadecanoyl-sn-glycero-3-phosphate + CoA. The enzyme catalyses 1-heptadecanoyl-sn-glycero-3-phosphate + (9Z)-octadecenoyl-CoA = 1-heptadecanoyl-2-(9Z)-octadecenoyl-sn-glycero-3-phosphate + CoA. It carries out the reaction 1-octadecanoyl-sn-glycero-3-phosphate + (9Z)-octadecenoyl-CoA = 1-octadecanoyl-2-(9Z-octadecenoyl)-sn-glycero-3-phosphate + CoA. The catalysed reaction is heptadecanoyl-CoA + 1-(9Z-octadecenoyl)-sn-glycero-3-phosphate = 1-(9Z)-octadecenoyl-2-heptadecanoyl-sn-glycero-3-phosphate + CoA. It catalyses the reaction 1-(9Z-octadecenoyl)-sn-glycero-3-phosphate + (9Z,12Z)-octadecadienoyl-CoA = 1-(9Z)-octadecenoyl-2-(9Z,12Z)-octadecadienoyl-sn-glycero-3-phosphate + CoA. The enzyme catalyses 1-(9Z-octadecenoyl)-sn-glycero-3-phosphate + tetradecanoyl-CoA = 1-(9Z)-octadecenoyl-2-tetradecanoyl-sn-glycero-3-phosphate + CoA. It carries out the reaction pentadecanoyl-CoA + 1-(9Z-octadecenoyl)-sn-glycero-3-phosphate = 1-(9Z)-octadecenoyl-2-pentadecanoyl-sn-glycero-3-phosphate + CoA. The catalysed reaction is nonadecanoyl-CoA + 1-(9Z-octadecenoyl)-sn-glycero-3-phosphate = 1-(9Z)-octadecenoyl-2-nonadecanoyl-sn-glycero-3-phosphate + CoA. It catalyses the reaction 1-hexadecanoyl-sn-glycero-3-phosphocholine + (9Z)-octadecenoyl-CoA = 1-hexadecanoyl-2-(9Z-octadecenoyl)-sn-glycero-3-phosphocholine + CoA. The enzyme catalyses 1-O-hexadecyl-sn-glycero-3-phosphocholine + acetyl-CoA = 1-O-hexadecyl-2-acetyl-sn-glycero-3-phosphocholine + CoA. It carries out the reaction 1-O-octadecyl-sn-glycero-3-phosphocholine + acetyl-CoA = 1-O-octadecyl-2-acetyl-sn-glycero-3-phosphocholine + CoA. The catalysed reaction is 1-hexadecanoyl-sn-glycero-3-phosphocholine + acetyl-CoA = 1-hexadecanoyl-2-acetyl-sn-glycero-3-phosphocholine + CoA. It catalyses the reaction 1-octadecanoyl-sn-glycero-3-phosphocholine + acetyl-CoA = 1-octadecanoyl-2-acetyl-sn-glycero-3-phosphocholine + CoA. The enzyme catalyses a 1-O-(1Z-alkenyl)-sn-glycero-3-phosphocholine + acetyl-CoA = 1-O-(1Z)-alkenyl-2-acetyl-sn-glycero-3-phosphocholine + CoA. It carries out the reaction 1-O-octadecyl-sn-glycero-3-phosphocholine + (5Z,8Z,11Z,14Z)-eicosatetraenoyl-CoA = 1-O-octadecyl-2-(5Z,8Z,11Z,14Z)-eicosatetraenoyl-sn-glycero-3-phosphocholine + CoA. It participates in lipid metabolism; phospholipid metabolism. Exhibits both acyltransferase and acetyltransferase activities. Activity is calcium-dependent. Catalyzes the conversion of lysophosphatidylcholine (1-acyl-sn-glycero-3-phosphocholine or LPC) into phosphatidylcholine (1,2-diacyl-sn-glycero-3-phosphocholine or PC). Catalyzes the conversion 1-acyl-sn-glycerol-3-phosphate (lysophosphatidic acid or LPA) into 1,2-diacyl-sn-glycerol-3-phosphate (phosphatidic acid or PA) by incorporating an acyl moiety at the sn-2 position of the glycerol backbone. Involved in platelet-activating factor (PAF) biosynthesis by catalyzing the conversion of the PAF precursor, 1-O-alkyl-sn-glycero-3-phosphocholine (lyso-PAF) into 1-O-alkyl-2-acetyl-sn-glycero-3-phosphocholine (PAF). This is Lysophosphatidylcholine acyltransferase 2 (lpcat2) from Danio rerio (Zebrafish).